We begin with the raw amino-acid sequence, 565 residues long: Dihydroxy-acid dehydratase (565 aa).

A Mg(2+)-binding site is contributed by aspartate 83. Cysteine 124 contacts [2Fe-2S] cluster. Positions 125 and 126 each coordinate Mg(2+). Lysine 126 bears the N6-carboxylysine mark. Cysteine 197 lines the [2Fe-2S] cluster pocket. Glutamate 451 is a binding site for Mg(2+). Serine 477 functions as the Proton acceptor in the catalytic mechanism.

The protein belongs to the IlvD/Edd family. As to quaternary structure, homodimer. [2Fe-2S] cluster is required as a cofactor. It depends on Mg(2+) as a cofactor.

The enzyme catalyses (2R)-2,3-dihydroxy-3-methylbutanoate = 3-methyl-2-oxobutanoate + H2O. The catalysed reaction is (2R,3R)-2,3-dihydroxy-3-methylpentanoate = (S)-3-methyl-2-oxopentanoate + H2O. The protein operates within amino-acid biosynthesis; L-isoleucine biosynthesis; L-isoleucine from 2-oxobutanoate: step 3/4. Its pathway is amino-acid biosynthesis; L-valine biosynthesis; L-valine from pyruvate: step 3/4. Its function is as follows. Functions in the biosynthesis of branched-chain amino acids. Catalyzes the dehydration of (2R,3R)-2,3-dihydroxy-3-methylpentanoate (2,3-dihydroxy-3-methylvalerate) into 2-oxo-3-methylpentanoate (2-oxo-3-methylvalerate) and of (2R)-2,3-dihydroxy-3-methylbutanoate (2,3-dihydroxyisovalerate) into 2-oxo-3-methylbutanoate (2-oxoisovalerate), the penultimate precursor to L-isoleucine and L-valine, respectively. This Symbiobacterium thermophilum (strain DSM 24528 / JCM 14929 / IAM 14863 / T) protein is Dihydroxy-acid dehydratase.